The following is a 198-amino-acid chain: Nucleoid occlusion factor SlmA (198 aa).

Residues 10 to 70 (NRREEILQSL…SLIEFIEDSL (61 aa)) form the HTH tetR-type domain. Residues 33–52 (TTAKLAASVGVSEAALYRHF) constitute a DNA-binding region (H-T-H motif). The stretch at 117–144 (EQDRLQGRINQLFERIEAQLRQVLREKR) forms a coiled coil.

The protein belongs to the nucleoid occlusion factor SlmA family. Homodimer. Interacts with FtsZ.

Its subcellular location is the cytoplasm. The protein localises to the nucleoid. Its function is as follows. Required for nucleoid occlusion (NO) phenomenon, which prevents Z-ring formation and cell division over the nucleoid. Acts as a DNA-associated cell division inhibitor that binds simultaneously chromosomal DNA and FtsZ, and disrupts the assembly of FtsZ polymers. SlmA-DNA-binding sequences (SBS) are dispersed on non-Ter regions of the chromosome, preventing FtsZ polymerization at these regions. The polypeptide is Nucleoid occlusion factor SlmA (Escherichia coli (strain 55989 / EAEC)).